The following is a 618-amino-acid chain: MPNVQSLAIIVTDPRLIISTWKDRCPAPLSSVGGMPILARLVSQLAQAGVQKTIVFALDGIGDVKRILNNRMKRMELVIRIMPTPGSGRLIDLATITEIAEFHGQVLVFTENAVIDPSLIQRLLRSSDRNITVVSRSERRRCLRLLGDIGGRLTAMLPGDSPIRESASADVSPVGIYKFDPALLRAIARIRPHRFNDDLEFFETALGLQRHQIYLMYADPQHVRRVNDATDLEAANFASSSSGDQFSILERLQAGNWRYPASEHILLCNHHFPPASVVDRLRERLQDLLYLQPSDQLDIIAKLSEMTDLPARNLAVGNGVGELIKALYGYLDPRIVIPTPTSAQYIDAVEPNKVSRFELPPENFDLDVEAFANFAKRRQASVAVLVNPNNPTGRLVPVQEIEWLASQLAIEKCRLVVDETFIEFSVAGKGNSVEKLLSVFPKMVILKSLGAIMGLGGAQIGYLASKDEQLTHGVRRRLPLGNINGIAEYLLWILPEFREEWEASFRRTRADVVSFSRMLDTIPELEVHPSQANYLFCRTPEAWPSAKHVATMLAKRYGVLVQNCENQCMKYGDRYLRLTVLPYEENRYLVSALRRINEELVEWSTQSKRAGTAYHLGC.

The protein to Rhizobium NGR234A y4qD.

This is an uncharacterized protein from Sinorhizobium fredii (strain NBRC 101917 / NGR234).